Here is a 279-residue protein sequence, read N- to C-terminus: Pantothenate synthetase (279 aa).

26–33 is an ATP binding site; it reads MGNLHEGH. H33 (proton donor) is an active-site residue. Position 57 (Q57) interacts with (R)-pantoate. A beta-alanine-binding site is contributed by Q57. 144 to 147 provides a ligand contact to ATP; that stretch reads GKKD. Q150 lines the (R)-pantoate pocket. ATP contacts are provided by residues V173 and 181 to 184; that span reads LSSR.

It belongs to the pantothenate synthetase family. As to quaternary structure, homodimer.

The protein localises to the cytoplasm. The enzyme catalyses (R)-pantoate + beta-alanine + ATP = (R)-pantothenate + AMP + diphosphate + H(+). Its pathway is cofactor biosynthesis; (R)-pantothenate biosynthesis; (R)-pantothenate from (R)-pantoate and beta-alanine: step 1/1. In terms of biological role, catalyzes the condensation of pantoate with beta-alanine in an ATP-dependent reaction via a pantoyl-adenylate intermediate. The protein is Pantothenate synthetase of Burkholderia cenocepacia (strain ATCC BAA-245 / DSM 16553 / LMG 16656 / NCTC 13227 / J2315 / CF5610) (Burkholderia cepacia (strain J2315)).